A 532-amino-acid chain; its full sequence is Autophagy-related protein 21 (532 aa).

WD repeat units follow at residues 265 to 310 (AHDS…KPFN) and 321 to 360 (HNIA…HESF). Residues 317–321 (LRRGH) carry the L/FRRG motif motif. The disordered stretch occupies residues 360-380 (FEYEEDPANESDPDDEDRSSE). Positions 361–378 (EYEEDPANESDPDDEDRS) are enriched in acidic residues.

It belongs to the WD repeat PROPPIN family.

The protein localises to the cytoplasm. Its subcellular location is the membrane. The protein resides in the vacuole membrane. Its function is as follows. Required for cytoplasm to vacuole transport (Cvt) vesicles formation and mitophagy. Involved in binding of phosphatidylethanolamine to ATG8 and in recruitment of ATG8 and ATG5 to the pre-autophagosomal structure. Protects ATG8 from ARG4-mediated cleavage. This is Autophagy-related protein 21 (ATG21) from Debaryomyces hansenii (strain ATCC 36239 / CBS 767 / BCRC 21394 / JCM 1990 / NBRC 0083 / IGC 2968) (Yeast).